The following is a 103-amino-acid chain: ATP synthase subunit f, mitochondrial (103 aa).

The N-terminal 6 residues, 1-6 (MIFRRQ), are a transit peptide targeting the mitochondrion.

F-type ATP synthases have 2 components, the catalytic core F(1) and the membrane-embedded component F(0), linked together by a central stalk and a peripheral stalk. The central stalk, also called rotor shaft, is often seen as part of F(1). The peripheral stalk is seen as part of F(0). F(0) contains the membrane channel next to the rotor. F-type ATP synthases form dimers but each monomer functions independently in ATP generation. The dimer consists of 17 different polypeptides: ATP1 (subunit alpha, 3 molecules per monomer, part of F(1)), ATP2 (subunit beta, 3 copies per monomer, part of F(1)), ATP3 (subunit gamma, part of the central stalk), ATP4 (subunit b, part of the peripheral stalk), ATP5/OSCP (subunit 5/OSCP, part of the peripheral stalk), ATP6 (subunit a, part of the peripheral stalk), ATP7 (subunit d, part of the peripheral stalk), ATP8 (subunit 8, part of the peripheral stalk), OLI1 (subunit c, part of the rotor, 10 molecules per monomer), ATP14 (subunit h, part of the peripheral stalk), ATP15 (subunit epsilon, part of the central stalk), ATP16 (subunit delta, part of the central stalk), ATP17 (subunit f, part of the peripheral stalk), ATP18 (subunit i/j, part of the peripheral stalk), ATP19 (subunit k, dimer-specific, at interface between monomers), ATP20 (subunit g, at interface between monomers), TIM11 (subunit e, at interface between monomers).

It is found in the mitochondrion inner membrane. Functionally, mitochondrial membrane ATP synthase (F(1)F(0) ATP synthase or Complex V) produces ATP from ADP in the presence of a proton gradient across the membrane which is generated by electron transport complexes of the respiratory chain. F-type ATP synthases consist of two structural domains, F(1) - containing the extramembraneous catalytic core, and F(0) - containing the membrane proton channel, linked together by a central stalk and a peripheral stalk. During catalysis, ATP synthesis in the catalytic domain of F(1) is coupled via a rotary mechanism of the central stalk subunits to proton translocation. Part of the complex F(0) domain. Minor subunit located with subunit a/ATP6 in the membrane. The sequence is that of ATP synthase subunit f, mitochondrial from Yarrowia lipolytica (strain CLIB 122 / E 150) (Yeast).